Consider the following 287-residue polypeptide: Merozoite surface protein 2 (287 aa).

The signal sequence occupies residues 1-20 (MKVIKTLSIINFFIFVTFNI). N-linked (GlcNAc...) asparagine glycosylation is found at Asn-22 and Asn-36. Residues 42–248 (SMTESNPPTG…DSQKECTDGN (207 aa)) are disordered. The segment at 44 to 213 (TESNPPTGAS…EQTESPELQS (170 aa)) is polymorphic region. Over residues 54-112 (GSAGGSAGGSAGGSAGGSAGGSAGGSAGGSAGGSAGGSAGGSAGGSAGGSAGSGDGNGA) the composition is skewed to gly residues. 12 repeat units span residues 55–58 (SAGG), 59–62 (SAGG), 63–66 (SAGG), 67–70 (SAGG), 71–74 (SAGG), 75–78 (SAGG), 79–82 (SAGG), 83–86 (SAGG), 87–90 (SAGG), 91–94 (SAGG), 95–98 (SAGG), and 99–102 (SAGG). Positions 55–102 (SAGGSAGGSAGGSAGGSAGGSAGGSAGGSAGGSAGGSAGGSAGGSAGG) are 12 X 4 AA tandem repeats of S-A-G-G. The segment covering 121-149 (SPSTPATTTTTTTTNDAEASTSTSSENPN) has biased composition (low complexity). Composition is skewed to polar residues over residues 150-180 (HNNA…NVPP) and 187-215 (KSPT…QSAP). Asn-164 is a glycosylation site (N-linked (GlcNAc...) asparagine). N-linked (GlcNAc...) asparagine glycosylation occurs at Asn-236. Cys-244 and Cys-252 are disulfide-bonded. N-linked (GlcNAc...) asparagine glycosylation is found at Asn-260 and Asn-261. A lipid anchor (GPI-anchor amidated asparagine) is attached at Asn-261. Residues 262-287 (SSNIASINKFVVLISATLVLSFAIFI) constitute a propeptide, removed in mature form.

It is found in the cell membrane. May play a role in the merozoite attachment to the erythrocyte. The chain is Merozoite surface protein 2 from Plasmodium falciparum (isolate FCR-3 / Gambia).